Here is a 215-residue protein sequence, read N- to C-terminus: Pyrrolidone-carboxylate peptidase (215 aa).

Catalysis depends on residues Glu-80, Cys-143, and His-167.

Belongs to the peptidase C15 family. In terms of assembly, homotetramer.

The protein localises to the cytoplasm. It catalyses the reaction Release of an N-terminal pyroglutamyl group from a polypeptide, the second amino acid generally not being Pro.. Its function is as follows. Removes 5-oxoproline from various penultimate amino acid residues except L-proline. The polypeptide is Pyrrolidone-carboxylate peptidase (Yersinia pestis bv. Antiqua (strain Antiqua)).